Here is a 992-residue protein sequence, read N- to C-terminus: Disks large-associated protein 4 (992 aa).

The segment covering 1–20 (MKGLGDSRPRHLSDSLDPPH) has biased composition (basic and acidic residues). Disordered regions lie at residues 1–31 (MKGL…DRNP) and 154–226 (APSM…ASGL). Residues 162–171 (GKVGGNGGKK) show a composition bias toward gly residues. Over residues 172 to 194 (GVLEDGKGRRAKSKERAKAGEPK) the composition is skewed to basic and acidic residues. Residues 199 to 208 (SNISGWWSSD) are compositionally biased toward polar residues. Phosphoserine occurs at positions 206 and 207. Arginine 290 carries the post-translational modification Omega-N-methylarginine. Disordered regions lie at residues 342 to 435 (TTLL…SWEE), 527 to 665 (SVSL…RKLS), 677 to 751 (VPKE…GPRQ), 763 to 798 (SYGD…AQPG), and 915 to 992 (TPEK…QTRL). Phosphoserine occurs at positions 377, 380, 384, 388, 405, 415, and 421. Polar residues predominate over residues 399-413 (LRATQQSLGEQSNPR). Positions 528 to 554 (VSLQSLSPPPSTGSLSNSRTLPSSSCL) are enriched in low complexity. Over residues 576–591 (VTVQSSTESAQDTYLD) the composition is skewed to polar residues. Phosphoserine occurs at positions 580, 581, 609, 611, 665, and 744. The segment covering 600-620 (TSQSGLSNSSDSLDSSTRPPS) has biased composition (low complexity). Position 915 is a phosphothreonine (threonine 915). Composition is skewed to basic and acidic residues over residues 915–925 (TPEKRKEEKKP) and 940–958 (VSRD…EARK). Polar residues predominate over residues 969–978 (VRQNSATESA). Serine 973 carries the phosphoserine modification.

Belongs to the SAPAP family. As to quaternary structure, interacts with DLG1 and DLG4/PSD-95. In terms of tissue distribution, expressed in brain.

It localises to the membrane. Its function is as follows. May play a role in the molecular organization of synapses and neuronal cell signaling. Could be an adapter protein linking ion channel to the subsynaptic cytoskeleton. May induce enrichment of PSD-95/SAP90 at the plasma membrane. This Rattus norvegicus (Rat) protein is Disks large-associated protein 4 (Dlgap4).